The sequence spans 518 residues: Membrane-bound lytic murein transglycosylase F (518 aa).

The signal sequence occupies residues 1 to 21 (MKKLKINYLFIGILALLLAVA). A non-LT domain region spans residues 22–269 (LWPSIPWFGK…RIEEKYLGHG (248 aa)). The tract at residues 270–518 (DDFDYVDTRT…SRKGSEEKQN (249 aa)) is LT domain. E314 is a catalytic residue.

This sequence in the N-terminal section; belongs to the bacterial solute-binding protein 3 family. The protein in the C-terminal section; belongs to the transglycosylase Slt family.

The protein localises to the cell outer membrane. It carries out the reaction Exolytic cleavage of the (1-&gt;4)-beta-glycosidic linkage between N-acetylmuramic acid (MurNAc) and N-acetylglucosamine (GlcNAc) residues in peptidoglycan, from either the reducing or the non-reducing ends of the peptidoglycan chains, with concomitant formation of a 1,6-anhydrobond in the MurNAc residue.. Its function is as follows. Murein-degrading enzyme that degrades murein glycan strands and insoluble, high-molecular weight murein sacculi, with the concomitant formation of a 1,6-anhydromuramoyl product. Lytic transglycosylases (LTs) play an integral role in the metabolism of the peptidoglycan (PG) sacculus. Their lytic action creates space within the PG sacculus to allow for its expansion as well as for the insertion of various structures such as secretion systems and flagella. The chain is Membrane-bound lytic murein transglycosylase F from Escherichia coli (strain SMS-3-5 / SECEC).